The primary structure comprises 509 residues: Maturase K (509 aa).

Belongs to the intron maturase 2 family. MatK subfamily.

It is found in the plastid. It localises to the chloroplast. Usually encoded in the trnK tRNA gene intron. Probably assists in splicing its own and other chloroplast group II introns. The chain is Maturase K from Trifolium semipilosum (Kenya clover).